Consider the following 269-residue polypeptide: Formamidopyrimidine-DNA glycosylase (269 aa).

Catalysis depends on proline 2, which acts as the Schiff-base intermediate with DNA. Catalysis depends on glutamate 3, which acts as the Proton donor. Residue lysine 57 is the Proton donor; for beta-elimination activity of the active site. DNA is bound by residues histidine 90, arginine 109, and lysine 150. The FPG-type zinc-finger motif lies at 235-269 (QVYGKGGLPCPKCGTELAEVKIGQRATVYCSQCQQ). Arginine 259 acts as the Proton donor; for delta-elimination activity in catalysis.

It belongs to the FPG family. In terms of assembly, monomer. Zn(2+) is required as a cofactor.

The catalysed reaction is Hydrolysis of DNA containing ring-opened 7-methylguanine residues, releasing 2,6-diamino-4-hydroxy-5-(N-methyl)formamidopyrimidine.. It carries out the reaction 2'-deoxyribonucleotide-(2'-deoxyribose 5'-phosphate)-2'-deoxyribonucleotide-DNA = a 3'-end 2'-deoxyribonucleotide-(2,3-dehydro-2,3-deoxyribose 5'-phosphate)-DNA + a 5'-end 5'-phospho-2'-deoxyribonucleoside-DNA + H(+). In terms of biological role, involved in base excision repair of DNA damaged by oxidation or by mutagenic agents. Acts as a DNA glycosylase that recognizes and removes damaged bases. Has a preference for oxidized purines, such as 7,8-dihydro-8-oxoguanine (8-oxoG). Has AP (apurinic/apyrimidinic) lyase activity and introduces nicks in the DNA strand. Cleaves the DNA backbone by beta-delta elimination to generate a single-strand break at the site of the removed base with both 3'- and 5'-phosphates. The protein is Formamidopyrimidine-DNA glycosylase of Photobacterium damsela subsp. piscicida (Pasteurella piscicida).